The chain runs to 151 residues: Ribosome maturation factor RimP (151 aa).

This sequence belongs to the RimP family.

The protein resides in the cytoplasm. Its function is as follows. Required for maturation of 30S ribosomal subunits. The sequence is that of Ribosome maturation factor RimP from Persephonella marina (strain DSM 14350 / EX-H1).